A 193-amino-acid chain; its full sequence is SCO1 protein homolog (193 aa).

The signal sequence occupies residues 1 to 18 (MKVIKGLTAGLIFLFLCA). A lipid anchor (N-palmitoyl cysteine) is attached at cysteine 19. Cysteine 19 carries the S-diacylglycerol cysteine lipid modification. Residues 26 to 191 (DPLNYEVEPF…IISDVKSAST (166 aa)) enclose the Thioredoxin domain. Residues cysteine 64, cysteine 68, and histidine 154 each coordinate Cu cation.

Belongs to the SCO1/2 family. In terms of assembly, monomer.

It is found in the cell membrane. Necessary for insertion of copper into the active site of cytochrome c oxidase. May play a role in copper homeostasis or redox signaling. The sequence is that of SCO1 protein homolog (ypmQ) from Bacillus subtilis (strain 168).